The sequence spans 459 residues: Bifunctional protein GlmU (459 aa).

Residues 1–229 are pyrophosphorylase; the sequence is MTNYAIILAA…FDESLGVNDR (229 aa). UDP-N-acetyl-alpha-D-glucosamine-binding positions include 8-11, Lys22, Gln72, and 77-78; these read LAAG and GT. Asp102 contributes to the Mg(2+) binding site. UDP-N-acetyl-alpha-D-glucosamine is bound by residues Gly139, Glu154, Asn169, and Asn227. Asn227 provides a ligand contact to Mg(2+). A linker region spans residues 230-250; sequence VALATAESVMRRRINQKHMVN. The tract at residues 251–459 is N-acetyltransferase; the sequence is GVSFVNPDAT…KRLPHHPQNK (209 aa). UDP-N-acetyl-alpha-D-glucosamine-binding residues include Arg332 and Lys350. His362 acts as the Proton acceptor in catalysis. Residues Tyr365 and Asn376 each coordinate UDP-N-acetyl-alpha-D-glucosamine. Residues Ala379, 385–386, Ser404, Ala422, and Arg439 contribute to the acetyl-CoA site; that span reads NY.

The protein in the N-terminal section; belongs to the N-acetylglucosamine-1-phosphate uridyltransferase family. This sequence in the C-terminal section; belongs to the transferase hexapeptide repeat family. In terms of assembly, homotrimer. The cofactor is Mg(2+).

The protein resides in the cytoplasm. The catalysed reaction is alpha-D-glucosamine 1-phosphate + acetyl-CoA = N-acetyl-alpha-D-glucosamine 1-phosphate + CoA + H(+). It catalyses the reaction N-acetyl-alpha-D-glucosamine 1-phosphate + UTP + H(+) = UDP-N-acetyl-alpha-D-glucosamine + diphosphate. Its pathway is nucleotide-sugar biosynthesis; UDP-N-acetyl-alpha-D-glucosamine biosynthesis; N-acetyl-alpha-D-glucosamine 1-phosphate from alpha-D-glucosamine 6-phosphate (route II): step 2/2. It functions in the pathway nucleotide-sugar biosynthesis; UDP-N-acetyl-alpha-D-glucosamine biosynthesis; UDP-N-acetyl-alpha-D-glucosamine from N-acetyl-alpha-D-glucosamine 1-phosphate: step 1/1. It participates in bacterial outer membrane biogenesis; LPS lipid A biosynthesis. Its function is as follows. Catalyzes the last two sequential reactions in the de novo biosynthetic pathway for UDP-N-acetylglucosamine (UDP-GlcNAc). The C-terminal domain catalyzes the transfer of acetyl group from acetyl coenzyme A to glucosamine-1-phosphate (GlcN-1-P) to produce N-acetylglucosamine-1-phosphate (GlcNAc-1-P), which is converted into UDP-GlcNAc by the transfer of uridine 5-monophosphate (from uridine 5-triphosphate), a reaction catalyzed by the N-terminal domain. This chain is Bifunctional protein GlmU, found in Streptococcus gordonii (strain Challis / ATCC 35105 / BCRC 15272 / CH1 / DL1 / V288).